The primary structure comprises 291 residues: uncharacterized protein (291 aa).

NAD(+) is bound by residues 5-19 (AFIGLGVMGFPMAGH) and T97. K172 is an active-site residue. An NAD(+)-binding site is contributed by K240.

Belongs to the HIBADH-related family.

This is an uncharacterized protein from Shewanella frigidimarina (strain NCIMB 400).